Reading from the N-terminus, the 89-residue chain is Protein PerC (89 aa).

Functionally, transcriptional activator of eaeA/bfpA expression in enteropathogenic E.coli. The protein is Protein PerC (perC) of Escherichia coli O111:H-.